The following is a 296-amino-acid chain: Nucleotide-binding protein Spy49_0545 (296 aa).

13-20 (GMSGAGKT) lines the ATP pocket. 63-66 (DMRS) is a binding site for GTP.

It belongs to the RapZ-like family.

In terms of biological role, displays ATPase and GTPase activities. The polypeptide is Nucleotide-binding protein Spy49_0545 (Streptococcus pyogenes serotype M49 (strain NZ131)).